Reading from the N-terminus, the 406-residue chain is Cysteine desulfurase (406 aa).

Lysine 226 carries the N6-(pyridoxal phosphate)lysine modification. Cysteine 364 serves as the catalytic Cysteine persulfide intermediate.

This sequence belongs to the class-V pyridoxal-phosphate-dependent aminotransferase family. Csd subfamily. In terms of assembly, homodimer. Interacts with SufE and the SufBCD complex composed of SufB, SufC and SufD. The interaction with SufE is required to mediate the direct transfer of the sulfur atom from the S-sulfanylcysteine. Pyridoxal 5'-phosphate serves as cofactor.

The protein resides in the cytoplasm. The catalysed reaction is (sulfur carrier)-H + L-cysteine = (sulfur carrier)-SH + L-alanine. It carries out the reaction L-selenocysteine + AH2 = hydrogenselenide + L-alanine + A + H(+). It participates in cofactor biosynthesis; iron-sulfur cluster biosynthesis. Cysteine desulfurases mobilize the sulfur from L-cysteine to yield L-alanine, an essential step in sulfur metabolism for biosynthesis of a variety of sulfur-containing biomolecules. Component of the suf operon, which is activated and required under specific conditions such as oxidative stress and iron limitation. Acts as a potent selenocysteine lyase in vitro, that mobilizes selenium from L-selenocysteine. Selenocysteine lyase activity is however unsure in vivo. This Escherichia fergusonii (strain ATCC 35469 / DSM 13698 / CCUG 18766 / IAM 14443 / JCM 21226 / LMG 7866 / NBRC 102419 / NCTC 12128 / CDC 0568-73) protein is Cysteine desulfurase.